Reading from the N-terminus, the 261-residue chain is Cell division protein B (261 aa).

Positions 213–261 are winged-helix-like fold; it reads SEDMILNYIKTTGGFIDVDYIAKNFDVSKDEVFNVLRRLEEKGLIVLEG.

Interacts with CdvA. Interacts with CdvC.

It is found in the cytoplasm. The protein localises to the nucleoid. In terms of biological role, part of a cell division machinery. The CdvA, CdvB and CdvC proteins polymerize between segregating nucleoids and persist throughout cell division, forming a successively smaller structure during constriction. The polypeptide is Cell division protein B (Sulfolobus acidocaldarius (strain ATCC 33909 / DSM 639 / JCM 8929 / NBRC 15157 / NCIMB 11770)).